The following is a 317-amino-acid chain: Olfactory receptor-like protein OLF3 (317 aa).

Residues 1 to 25 (MGTGNQTWVREFVLLGLSSDWDTEV) are Extracellular-facing. N-linked (GlcNAc...) asparagine glycosylation occurs at Asn5. A helical transmembrane segment spans residues 26–49 (SLFVLFLITYMVTVLGNFLIILLI). The Cytoplasmic portion of the chain corresponds to 50-57 (RLDSRLHT). A helical transmembrane segment spans residues 58–79 (PMYFFLTNLSLVDVSYATSIIP). Over 80-100 (QMLAHLLAAHKAIPFVSCAAQ) the chain is Extracellular. Residues 101–120 (LFFSLGLGGIEFVLLAVMAY) form a helical membrane-spanning segment. The Cytoplasmic segment spans residues 121-139 (DRYVAVCDPLRYSVIMHGG). The helical transmembrane segment at 140-158 (LCTRLAITSWVSGSMNSLM) threads the bilayer. Residues 159–196 (QTVITFQLPMCTNKYIDHISCELLAVVRLACVDTSSNE) lie on the Extracellular side of the membrane. The helical transmembrane segment at 197–219 (IAIMVSSIVLLMTPFCLVLLSYI) threads the bilayer. Residues 220–236 (QIISTILKIQSTEGRKK) lie on the Cytoplasmic side of the membrane. A helical transmembrane segment spans residues 237-260 (AFHTCASHLTVVVLCYGMAIFTYI). Residues 261-272 (QPRSSPSVLQEK) are Extracellular-facing. A helical transmembrane segment spans residues 273 to 292 (LISLFYSVLTPMLNPMIYSV). Over 293 to 317 (RNKEVKGAWQKLLGQLTGITSKLAT) the chain is Cytoplasmic.

It belongs to the G-protein coupled receptor 1 family.

The protein resides in the cell membrane. Functionally, putative odorant or sperm cell receptor. The sequence is that of Olfactory receptor-like protein OLF3 from Canis lupus familiaris (Dog).